The primary structure comprises 79 residues: Putative transmembrane protein ORF17 (79 aa).

2 consecutive transmembrane segments (helical) span residues 8 to 28 (LMIYFFLPVSYLLVGFVIMYY) and 50 to 70 (VFVMILLIWPFFLFLVVTTTI).

The protein resides in the host membrane. In Haloarcula hispanica (His1V), this protein is Putative transmembrane protein ORF17.